A 255-amino-acid chain; its full sequence is Hydroxyacylglutathione hydrolase (255 aa).

Zn(2+) is bound by residues H53, H55, D57, H58, H111, D128, and H166.

It belongs to the metallo-beta-lactamase superfamily. Glyoxalase II family. As to quaternary structure, monomer. Zn(2+) is required as a cofactor.

It catalyses the reaction an S-(2-hydroxyacyl)glutathione + H2O = a 2-hydroxy carboxylate + glutathione + H(+). It functions in the pathway secondary metabolite metabolism; methylglyoxal degradation; (R)-lactate from methylglyoxal: step 2/2. Functionally, thiolesterase that catalyzes the hydrolysis of S-D-lactoyl-glutathione to form glutathione and D-lactic acid. The sequence is that of Hydroxyacylglutathione hydrolase from Nitrosomonas eutropha (strain DSM 101675 / C91 / Nm57).